A 180-amino-acid polypeptide reads, in one-letter code: NEDD8-conjugating enzyme ubc-12 (180 aa).

Positions 24–180 (VRDKLLAQEL…RVREYISRYC (157 aa)) constitute a UBC core domain. Cys-112 (glycyl thioester intermediate) is an active-site residue.

Belongs to the ubiquitin-conjugating enzyme family. UBC12 subfamily.

It localises to the cytoplasm. It carries out the reaction [E1 NEDD8-activating enzyme]-S-[NEDD8 protein]-yl-L-cysteine + [E2 NEDD8-conjugating enzyme]-L-cysteine = [E1 NEDD8-activating enzyme]-L-cysteine + [E2 NEDD8-conjugating enzyme]-S-[NEDD8-protein]-yl-L-cysteine.. It participates in protein modification; protein neddylation. In terms of biological role, accepts the ubiquitin-like protein NEDD8 from the uba-3-ula-1 E1 complex and catalyzes its covalent attachment to other proteins. Plays a role in male tail tip morphogenesis. The protein is NEDD8-conjugating enzyme ubc-12 of Caenorhabditis elegans.